The following is a 280-amino-acid chain: P32 adhesin (280 aa).

2 helical membrane-spanning segments follow: residues 13–37 and 68–92; these read FIVL…ALVV and WFIP…AIGL. Positions 114–128 are enriched in polar residues; sequence EQLQRISDQQEQQTV. 2 disordered regions span residues 114–149 and 163–280; these read EQLQ…QPLQ and FNPN…GLKP. Low complexity-rich tracts occupy residues 132-149 and 168-188; these read PQQS…QPLQ and QQRP…NFNP. 13 tandem repeats follow at residues 163 to 168, 170 to 174, 186 to 190, 191 to 195, 196 to 200, 199 to 204, 206 to 210, 222 to 226, 227 to 231, 232 to 236, 249 to 254, 256 to 260, and 259 to 264. Residues 163-264 are 6 X 5 AA repeats of [FM]-N-P-N-M-Q; that stretch reads FNPNMQQRPG…QRPGFNPNMQ (102 aa). The 5 X 5 AA repeats of R-P-G-F-N stretch occupies residues 170–260; the sequence is RPGFNQPNQQ…PNMQQRPGFN (91 aa). Positions 186–226 are 2 X 5 AA repeats of F-N-P-R-M; the sequence is FNPRMNPNMQRPGFNPNMQQRPGFNQPNQQFQPHNNFNPRM. Over residues 204 to 224 the composition is skewed to low complexity; the sequence is QQRPGFNQPNQQFQPHNNFNP. Positions 235 to 257 are enriched in low complexity; sequence FNQPHPNQFAQPNNFNPNMQQRP. Over residues 261–271 the composition is skewed to polar residues; sequence PNMQQRPNPSQ.

Its subcellular location is the cell projection. It localises to the attachment organelle membrane. Functionally, adhesin necessary for successful cytadherence and virulence. In Mycoplasma genitalium (strain ATCC 33530 / DSM 19775 / NCTC 10195 / G37) (Mycoplasmoides genitalium), this protein is P32 adhesin.